The following is an 831-amino-acid chain: Periplasmic nitrate reductase (831 aa).

The segment at residues 1 to 35 (MTISDSRRTFLKASAAAATASAAGIPLANGTAAEA) is a signal peptide (tat-type signal). The 4Fe-4S Mo/W bis-MGD-type domain occupies 42–98 (IRWDKAACRFCGTGCSVLVGTKEGRVVATQGDPDAPVNRGLNCIKGYFLSKIMYGED). [4Fe-4S] cluster-binding residues include Cys49, Cys52, Cys56, and Cys84. Residues Lys86, Gln153, Asn178, Cys182, 215 to 222 (WGSNMAEM), 246 to 250 (STYEH), 265 to 267 (QTD), Met375, Gln379, Asn485, 511 to 512 (SD), Lys534, Asp561, and 721 to 730 (TGRVLEHWHS) contribute to the Mo-bis(molybdopterin guanine dinucleotide) site. Trp797 lines the substrate pocket. The Mo-bis(molybdopterin guanine dinucleotide) site is built by Asn805 and Lys822.

The protein belongs to the prokaryotic molybdopterin-containing oxidoreductase family. NasA/NapA/NarB subfamily. Component of the periplasmic nitrate reductase NapAB complex composed of NapA and NapB. Requires [4Fe-4S] cluster as cofactor. It depends on Mo-bis(molybdopterin guanine dinucleotide) as a cofactor. Predicted to be exported by the Tat system. The position of the signal peptide cleavage has not been experimentally proven.

The protein localises to the periplasm. It catalyses the reaction 2 Fe(II)-[cytochrome] + nitrate + 2 H(+) = 2 Fe(III)-[cytochrome] + nitrite + H2O. Catalytic subunit of the periplasmic nitrate reductase complex NapAB. Receives electrons from NapB and catalyzes the reduction of nitrate to nitrite. This chain is Periplasmic nitrate reductase, found in Dinoroseobacter shibae (strain DSM 16493 / NCIMB 14021 / DFL 12).